Consider the following 1241-residue polypeptide: Phosphorylase b kinase regulatory subunit alpha, skeletal muscle isoform (1241 aa).

9 positions are modified to phosphoserine: serine 629, serine 730, serine 736, serine 739, serine 759, serine 812, serine 973, serine 982, and serine 986. The segment at 811–841 (LSELYVKVGEIRHWGLIRYISGILRKKVEAL) is calmodulin-binding. Position 1008 is a phosphoserine; by autocatalysis (serine 1008). Position 1019 is a phosphoserine; by PKA (serine 1019). A phosphoserine mark is found at serine 1021 and serine 1024. Residues 1064-1104 (SKDSRQGQWQRRRRLDGALNRVPIGFYQKVWKILQKCHGLS) form a calmodulin-binding region. The residue at position 1131 (serine 1131) is a Phosphoserine. Residue cysteine 1238 is the site of S-farnesyl cysteine attachment.

The protein belongs to the phosphorylase b kinase regulatory chain family. Hexadecamer of 4 heterotetramers, each composed of alpha, beta, gamma, and delta subunits. Alpha (PHKA1 or PHKA2) and beta (PHKB) are regulatory subunits, gamma (PHKG1 or PHKG2) is the catalytic subunit, and delta is calmodulin. Although the final Cys may be farnesylated, the terminal tripeptide is probably not removed, and the C-terminus is not methylated. As to expression, both isoforms are expressed in muscle.

The protein resides in the cell membrane. It functions in the pathway glycan biosynthesis; glycogen metabolism. Its activity is regulated as follows. By phosphorylation of various serine residues and by calcium. Phosphorylase b kinase catalyzes the phosphorylation of serine in certain substrates, including troponin I. The alpha chain may bind calmodulin. This chain is Phosphorylase b kinase regulatory subunit alpha, skeletal muscle isoform (Phka1), found in Mus musculus (Mouse).